Reading from the N-terminus, the 787-residue chain is DNA ligase (787 aa).

NAD(+) contacts are provided by residues 32-36 (DVEYD), 81-82 (SL), and E121. The N6-AMP-lysine intermediate role is filled by K123. NAD(+) is bound by residues R144, E181, K297, and K321. C415, C418, C445, and C451 together coordinate Zn(2+). One can recognise a BRCT domain in the interval 703 to 787 (VEGLPLAGQT…RLIELGVAVD (85 aa)).

Belongs to the NAD-dependent DNA ligase family. LigA subfamily. The cofactor is Mg(2+). Mn(2+) serves as cofactor.

It catalyses the reaction NAD(+) + (deoxyribonucleotide)n-3'-hydroxyl + 5'-phospho-(deoxyribonucleotide)m = (deoxyribonucleotide)n+m + AMP + beta-nicotinamide D-nucleotide.. DNA ligase that catalyzes the formation of phosphodiester linkages between 5'-phosphoryl and 3'-hydroxyl groups in double-stranded DNA using NAD as a coenzyme and as the energy source for the reaction. It is essential for DNA replication and repair of damaged DNA. The sequence is that of DNA ligase from Pseudomonas syringae pv. syringae (strain B728a).